The following is a 341-amino-acid chain: tRNA N6-adenosine threonylcarbamoyltransferase (341 aa).

2 residues coordinate Fe cation: His-111 and His-115. Substrate is bound by residues Leu-134–Gly-138, Asp-167, Gly-180, and Asn-276. Residue Asp-304 coordinates Fe cation.

It belongs to the KAE1 / TsaD family. Fe(2+) serves as cofactor.

Its subcellular location is the cytoplasm. The catalysed reaction is L-threonylcarbamoyladenylate + adenosine(37) in tRNA = N(6)-L-threonylcarbamoyladenosine(37) in tRNA + AMP + H(+). Functionally, required for the formation of a threonylcarbamoyl group on adenosine at position 37 (t(6)A37) in tRNAs that read codons beginning with adenine. Is involved in the transfer of the threonylcarbamoyl moiety of threonylcarbamoyl-AMP (TC-AMP) to the N6 group of A37, together with TsaE and TsaB. TsaD likely plays a direct catalytic role in this reaction. In Pseudomonas syringae pv. tomato (strain ATCC BAA-871 / DC3000), this protein is tRNA N6-adenosine threonylcarbamoyltransferase.